We begin with the raw amino-acid sequence, 334 residues long: N-acetyl-gamma-glutamyl-phosphate reductase (334 aa).

C142 is an active-site residue.

The protein belongs to the NAGSA dehydrogenase family. Type 1 subfamily.

The protein localises to the cytoplasm. It carries out the reaction N-acetyl-L-glutamate 5-semialdehyde + phosphate + NADP(+) = N-acetyl-L-glutamyl 5-phosphate + NADPH + H(+). It functions in the pathway amino-acid biosynthesis; L-arginine biosynthesis; N(2)-acetyl-L-ornithine from L-glutamate: step 3/4. In terms of biological role, catalyzes the NADPH-dependent reduction of N-acetyl-5-glutamyl phosphate to yield N-acetyl-L-glutamate 5-semialdehyde. The protein is N-acetyl-gamma-glutamyl-phosphate reductase of Pelodictyon phaeoclathratiforme (strain DSM 5477 / BU-1).